Reading from the N-terminus, the 54-residue chain is UPF0391 membrane protein Sde_0270 (54 aa).

2 helical membrane-spanning segments follow: residues 6-26 (IVFLLIALVAGLFGFVGIAGV) and 29-49 (GIAKILFFVFLIAFVVSLVIG).

It belongs to the UPF0391 family.

The protein resides in the cell membrane. This Saccharophagus degradans (strain 2-40 / ATCC 43961 / DSM 17024) protein is UPF0391 membrane protein Sde_0270.